Consider the following 271-residue polypeptide: Auxin-responsive protein IAA5 (271 aa).

The interval 1 to 96 (MSPPLEPHDY…RHGASSGSVA (96 aa)) is disordered. Low complexity-rich tracts occupy residues 14–33 (SAAA…SPNP) and 40–50 (PRLTLRLGLPG). The short motif at 44 to 48 (LRLGL) is the EAR-like (transcriptional repression) element. One can recognise a PB1 domain in the interval 151-255 (PLYVKVSMDG…RKLKIMRGSD (105 aa)).

It belongs to the Aux/IAA family. In terms of assembly, homodimers and heterodimers.

It is found in the nucleus. Aux/IAA proteins are short-lived transcriptional factors that function as repressors of early auxin response genes at low auxin concentrations. The protein is Auxin-responsive protein IAA5 (IAA5) of Oryza sativa subsp. japonica (Rice).